The primary structure comprises 248 residues: Gamma-interferon-inducible lysosomal thiol reductase (248 aa).

The N-terminal stretch at 1-26 is a signal peptide; that stretch reads MSWSPILPFLSLLLLLFPLEVPRAAT. A propeptide spans 27 to 54 (removed in mature form); the sequence is ASLSQASSEGTTTCKAHDVCLLGPRPLP. Cys-69 and Cys-72 are joined by a disulfide. N-linked (GlcNAc...) asparagine glycosylation is found at Asn-92 and Asn-105. Positions 231-248 are cleaved as a propeptide — removed in mature form; sequence KPDICSSIADSPRKVCYK.

Belongs to the GILT family. As to quaternary structure, dimer; disulfide-linked. In terms of processing, N-glycosylated. Sugar chains contain mannose-6-phosphate. Post-translationally, synthesized as a 35 kDa precursor which is then processed into the mature 30 kDa form via cleavage of N-terminal and C-terminal propeptides. Processing of the precursor is mediated by multiple lysosomal proteases.

The protein resides in the secreted. The protein localises to the lysosome. Lysosomal thiol reductase that can reduce protein disulfide bonds. May facilitate the complete unfolding of proteins destined for lysosomal degradation. Plays an important role in antigen processing. Facilitates the generation of MHC class II-restricted epitodes from disulfide bond-containing antigen by the endocytic reduction of disulfide bonds. Also facilitates MHC class I-restricted recognition of exogenous antigens containing disulfide bonds by CD8+ T-cells or crosspresentation. The sequence is that of Gamma-interferon-inducible lysosomal thiol reductase (Ifi30) from Mus musculus (Mouse).